We begin with the raw amino-acid sequence, 210 residues long: Helix-loop-helix protein 26 (210 aa).

The span at 1-15 (MSSSPTSSSSGSPSS) shows a compositional bias: low complexity. The segment at 1-33 (MSSSPTSSSSGSPSSHGHRSETEKQRRDDTNDL) is disordered. One can recognise a bHLH domain in the interval 14–65 (SSHGHRSETEKQRRDDTNDLLNEFKKIVQKSESEKLSKEEVLFRIVKLLSGI). Basic and acidic residues predominate over residues 18–33 (HRSETEKQRRDDTNDL).

In terms of assembly, homodimer; binds to DNA as a homodimer. As to expression, expressed in intestinal cells (at protein level).

The protein resides in the nucleus. Its function is as follows. As a homodimer binds DNA via the E-box sequence 5'-CACGTG-3'. Represses lag-2 transcription during embryogenesis via Notch signaling, in an unc-37-dependent manner. Also represses tbx-37 independent of Notch signaling. In the intestine, plays a role in probiotic-mediated protection against infections by pathogens such as S.enterica. This is most likely by positively regulating the expression of genes such as bar-1 upon exposure to probiotic bacteria such as the E.faecium. This is Helix-loop-helix protein 26 from Caenorhabditis elegans.